The sequence spans 345 residues: Myb/SANT-like DNA-binding domain-containing protein 4 (345 aa).

In terms of domain architecture, Myb-like spans 4-77 (LKRKRKSNFS…EVKRRYLDWR (74 aa)). Lys-9 participates in a covalent cross-link: Glycyl lysine isopeptide (Lys-Gly) (interchain with G-Cter in SUMO2). Phosphoserine is present on Ser-106. Residues Lys-114 and Lys-142 each participate in a glycyl lysine isopeptide (Lys-Gly) (interchain with G-Cter in SUMO2) cross-link. The segment at 141–160 (VKVEEEERDPQSPEFEIEEE) is disordered. At Thr-188 the chain carries Phosphothreonine. Residues 203–345 (LLVNIEKQKL…LRIQKEGHLQ (143 aa)) are a coiled coil. Residues Lys-237, Lys-254, and Lys-273 each participate in a glycyl lysine isopeptide (Lys-Gly) (interchain with G-Cter in SUMO2) cross-link.

The sequence is that of Myb/SANT-like DNA-binding domain-containing protein 4 (MSANTD4) from Bos taurus (Bovine).